Reading from the N-terminus, the 421-residue chain is Enolase (421 aa).

Gln165 provides a ligand contact to (2R)-2-phosphoglycerate. Glu207 acts as the Proton donor in catalysis. Mg(2+) contacts are provided by Asp244, Glu285, and Asp312. Residues Lys337, Arg366, Ser367, and Lys388 each coordinate (2R)-2-phosphoglycerate. The active-site Proton acceptor is the Lys337.

Belongs to the enolase family. Mg(2+) serves as cofactor.

It localises to the cytoplasm. It is found in the secreted. Its subcellular location is the cell surface. It catalyses the reaction (2R)-2-phosphoglycerate = phosphoenolpyruvate + H2O. The protein operates within carbohydrate degradation; glycolysis; pyruvate from D-glyceraldehyde 3-phosphate: step 4/5. In terms of biological role, catalyzes the reversible conversion of 2-phosphoglycerate (2-PG) into phosphoenolpyruvate (PEP). It is essential for the degradation of carbohydrates via glycolysis. The polypeptide is Enolase (Ehrlichia canis (strain Jake)).